The sequence spans 380 residues: Erythronate-4-phosphate dehydrogenase (380 aa).

Residues S45 and T66 each contribute to the substrate site. NAD(+) is bound by residues D146, T174, 205–207 (ASR), and D231. Residue R207 is part of the active site. E236 is a catalytic residue. The active-site Proton donor is H253. An NAD(+)-binding site is contributed by G256. A substrate-binding site is contributed by Y257.

The protein belongs to the D-isomer specific 2-hydroxyacid dehydrogenase family. PdxB subfamily. Homodimer.

Its subcellular location is the cytoplasm. The catalysed reaction is 4-phospho-D-erythronate + NAD(+) = (R)-3-hydroxy-2-oxo-4-phosphooxybutanoate + NADH + H(+). It participates in cofactor biosynthesis; pyridoxine 5'-phosphate biosynthesis; pyridoxine 5'-phosphate from D-erythrose 4-phosphate: step 2/5. Its function is as follows. Catalyzes the oxidation of erythronate-4-phosphate to 3-hydroxy-2-oxo-4-phosphonooxybutanoate. This chain is Erythronate-4-phosphate dehydrogenase, found in Pseudomonas putida (strain ATCC 700007 / DSM 6899 / JCM 31910 / BCRC 17059 / LMG 24140 / F1).